Reading from the N-terminus, the 276-residue chain is Mitochondrial outer membrane protein porin 1 (276 aa).

Belongs to the eukaryotic mitochondrial porin (TC 1.B.8.1) family. In terms of tissue distribution, expressed in shoot meristems, root meristematic zone, lateral roots, leaves, stigma and anthers.

Its subcellular location is the mitochondrion outer membrane. In terms of biological role, forms a channel through the mitochondrial outer membrane that allows diffusion of small hydrophilic molecules. The channel adopts an open conformation at low or zero membrane potential and a closed conformation at potentials above 30-40 mV. The open state has a weak anion selectivity whereas the closed state is cation-selective. Involved in plant development at reproductive stage, is important for pollen development and may regulate hydrogen peroxide generation during disease resistance. This Arabidopsis thaliana (Mouse-ear cress) protein is Mitochondrial outer membrane protein porin 1 (VDAC1).